The chain runs to 253 residues: 5'/3'-nucleotidase SurE (253 aa).

A divalent metal cation contacts are provided by Asp-8, Asp-9, Ser-39, and Asn-92.

Belongs to the SurE nucleotidase family. The cofactor is a divalent metal cation.

It is found in the cytoplasm. The catalysed reaction is a ribonucleoside 5'-phosphate + H2O = a ribonucleoside + phosphate. The enzyme catalyses a ribonucleoside 3'-phosphate + H2O = a ribonucleoside + phosphate. It catalyses the reaction [phosphate](n) + H2O = [phosphate](n-1) + phosphate + H(+). In terms of biological role, nucleotidase with a broad substrate specificity as it can dephosphorylate various ribo- and deoxyribonucleoside 5'-monophosphates and ribonucleoside 3'-monophosphates with highest affinity to 3'-AMP. Also hydrolyzes polyphosphate (exopolyphosphatase activity) with the preference for short-chain-length substrates (P20-25). Might be involved in the regulation of dNTP and NTP pools, and in the turnover of 3'-mononucleotides produced by numerous intracellular RNases (T1, T2, and F) during the degradation of various RNAs. The chain is 5'/3'-nucleotidase SurE from Salmonella paratyphi B (strain ATCC BAA-1250 / SPB7).